Reading from the N-terminus, the 103-residue chain is NAD(P)H-quinone oxidoreductase subunit 4L, organellar chromatophore (103 aa).

3 helical membrane-spanning segments follow: residues 3-23 (IMLE…VWGL), 32-52 (VLMS…AFSN), and 63-83 (VFAI…LAIL).

The protein belongs to the complex I subunit 4L family. In terms of assembly, NDH is composed of at least 16 different subunits, 5 of which are encoded in the nucleus.

The protein resides in the plastid. It is found in the organellar chromatophore thylakoid membrane. The catalysed reaction is a plastoquinone + NADH + (n+1) H(+)(in) = a plastoquinol + NAD(+) + n H(+)(out). The enzyme catalyses a plastoquinone + NADPH + (n+1) H(+)(in) = a plastoquinol + NADP(+) + n H(+)(out). Functionally, NDH shuttles electrons from NAD(P)H:plastoquinone, via FMN and iron-sulfur (Fe-S) centers, to quinones in the photosynthetic chain and possibly in a chloroplast respiratory chain. The immediate electron acceptor for the enzyme in this species is believed to be plastoquinone. Couples the redox reaction to proton translocation, and thus conserves the redox energy in a proton gradient. The protein is NAD(P)H-quinone oxidoreductase subunit 4L, organellar chromatophore of Paulinella chromatophora.